The chain runs to 350 residues: S-adenosylmethionine:tRNA ribosyltransferase-isomerase (350 aa).

It belongs to the QueA family. As to quaternary structure, monomer.

The protein localises to the cytoplasm. It catalyses the reaction 7-aminomethyl-7-carbaguanosine(34) in tRNA + S-adenosyl-L-methionine = epoxyqueuosine(34) in tRNA + adenine + L-methionine + 2 H(+). Its pathway is tRNA modification; tRNA-queuosine biosynthesis. Its function is as follows. Transfers and isomerizes the ribose moiety from AdoMet to the 7-aminomethyl group of 7-deazaguanine (preQ1-tRNA) to give epoxyqueuosine (oQ-tRNA). This chain is S-adenosylmethionine:tRNA ribosyltransferase-isomerase, found in Vibrio vulnificus (strain CMCP6).